Here is a 144-residue protein sequence, read N- to C-terminus: uncharacterized protein (144 aa).

A compositionally biased stretch (basic residues) spans 124 to 133 (KALNRKKSKT). The interval 124-144 (KALNRKKSKTKNGEKNGEGKS) is disordered. The span at 134 to 144 (KNGEKNGEGKS) shows a compositional bias: basic and acidic residues.

This is an uncharacterized protein from Acidianus filamentous virus 1 (isolate United States/Yellowstone) (AFV-1).